A 126-amino-acid chain; its full sequence is Large ribosomal subunit protein bL12 (126 aa).

Positions 107–116 are enriched in basic and acidic residues; sequence EDAEKAKSQL. Residues 107-126 are disordered; sequence EDAEKAKSQLEEAGATVELK.

Belongs to the bacterial ribosomal protein bL12 family. In terms of assembly, homodimer. Part of the ribosomal stalk of the 50S ribosomal subunit. Forms a multimeric L10(L12)X complex, where L10 forms an elongated spine to which 2 to 4 L12 dimers bind in a sequential fashion. Binds GTP-bound translation factors.

Forms part of the ribosomal stalk which helps the ribosome interact with GTP-bound translation factors. Is thus essential for accurate translation. In Bifidobacterium adolescentis (strain ATCC 15703 / DSM 20083 / NCTC 11814 / E194a), this protein is Large ribosomal subunit protein bL12.